A 595-amino-acid chain; its full sequence is D-xylonate dehydratase (595 aa).

Cys-64 is a binding site for [2Fe-2S] cluster. A Mg(2+)-binding site is contributed by Glu-96. Cys-132 is a binding site for [2Fe-2S] cluster. Residue Asp-133 participates in Mg(2+) binding. Cys-205 is a [2Fe-2S] cluster binding site. Glu-467 contacts Mg(2+).

This sequence belongs to the IlvD/Edd family. As to quaternary structure, homotetramer. [2Fe-2S] cluster serves as cofactor. Mg(2+) is required as a cofactor.

The catalysed reaction is D-xylonate = 2-dehydro-3-deoxy-D-arabinonate + H2O. The enzyme catalyses D-gluconate = 2-dehydro-3-deoxy-D-gluconate + H2O. It participates in carbohydrate metabolism; D-xylose degradation. Its function is as follows. Catalyzes the dehydration of D-xylonate to 2-dehydro-3-deoxy-D-arabinonate during D-xylose degradation. Can also dehydrate D-gluconate, with similar catalytic efficiency. Has weak activity with D-galactonate, D-fuconate and L-arabinonate. This chain is D-xylonate dehydratase, found in Caulobacter vibrioides (strain ATCC 19089 / CIP 103742 / CB 15) (Caulobacter crescentus).